A 288-amino-acid polypeptide reads, in one-letter code: Undecaprenyl-diphosphatase (288 aa).

8 consecutive transmembrane segments (helical) span residues 25–45 (GITE…NEFL), 53–73 (FIDM…MVIY), 93–113 (WKLW…GLLL), 121–141 (LSNF…FIWI), 171–191 (VLSI…GIIV), 196–216 (SVAA…YSGL), 231–251 (GQAA…LFVI), and 263–283 (FTVF…YGAV).

The protein belongs to the UppP family.

The protein resides in the cell membrane. It carries out the reaction di-trans,octa-cis-undecaprenyl diphosphate + H2O = di-trans,octa-cis-undecaprenyl phosphate + phosphate + H(+). Catalyzes the dephosphorylation of undecaprenyl diphosphate (UPP). Confers resistance to bacitracin. The protein is Undecaprenyl-diphosphatase of Streptococcus thermophilus (strain ATCC BAA-250 / LMG 18311).